A 259-amino-acid chain; its full sequence is Pycsar effector protein RsmPycTIR (259 aa).

1-120 (MVGGDEVIAN…RRVHEDFSGR (120 aa)) contacts a nucleoside 3',5'-cyclic phosphate. Residues 126-229 (LATGISRRTS…AEFQYQISSS (104 aa)) are TIR-like. Transmembrane regions (helical) follow at residues 136 to 156 (GWNW…AIWY), 169 to 189 (VLLP…ADPV), and 234 to 254 (QATA…LFWI).

The protein resides in the cell inner membrane. The catalysed reaction is NAD(+) + H2O = ADP-D-ribose + nicotinamide + H(+). Its function is as follows. Pycsar (pyrimidine cyclase system for antiphage resistance) provides immunity against bacteriophage. The pyrimidine cyclase (PycC) synthesizes cyclic nucleotides in response to infection; these serve as specific second messenger signals. The signals activate the adjacent effector, leading to bacterial cell death and abortive phage infection. A clade B Pycsar system. In terms of biological role, the effector gene of a two-gene Pycsar system. Expression of this and adjacent uridylate cyclase RsmPycC (AC A0A1V0HUX5) probably confers resistance to bacteriophage. The genes are probably only expressed in response to bacteriophage infection. Probably only responds to cUMP (produced by its cognate NTP cyclase), it may act by degrading NAD(+) and/or by impairing membrane integrity. The protein is Pycsar effector protein RsmPycTIR of Rhodovulum sp. (strain MB263).